A 490-amino-acid polypeptide reads, in one-letter code: Acetyl-coenzyme A carboxylase carboxyl transferase subunit beta, chloroplastic (490 aa).

The region spanning 228 to 490 (LWVQCENCYG…FKLHAFFPLN (263 aa)) is the CoA carboxyltransferase N-terminal domain. Cys232, Cys235, Cys251, and Cys254 together coordinate Zn(2+). The C4-type zinc finger occupies 232–254 (CENCYGLNYKKLLKSKMNICDQC).

It belongs to the AccD/PCCB family. In terms of assembly, acetyl-CoA carboxylase is a heterohexamer composed of biotin carboxyl carrier protein, biotin carboxylase and 2 subunits each of ACCase subunit alpha and ACCase plastid-coded subunit beta (accD). The cofactor is Zn(2+).

The protein resides in the plastid. The protein localises to the chloroplast stroma. It carries out the reaction N(6)-carboxybiotinyl-L-lysyl-[protein] + acetyl-CoA = N(6)-biotinyl-L-lysyl-[protein] + malonyl-CoA. Its pathway is lipid metabolism; malonyl-CoA biosynthesis; malonyl-CoA from acetyl-CoA: step 1/1. In terms of biological role, component of the acetyl coenzyme A carboxylase (ACC) complex. Biotin carboxylase (BC) catalyzes the carboxylation of biotin on its carrier protein (BCCP) and then the CO(2) group is transferred by the transcarboxylase to acetyl-CoA to form malonyl-CoA. The protein is Acetyl-coenzyme A carboxylase carboxyl transferase subunit beta, chloroplastic of Eucalyptus globulus subsp. globulus (Tasmanian blue gum).